We begin with the raw amino-acid sequence, 280 residues long: 2-dehydro-3-deoxyphosphooctonate aldolase (280 aa).

It belongs to the KdsA family.

The protein resides in the cytoplasm. It catalyses the reaction D-arabinose 5-phosphate + phosphoenolpyruvate + H2O = 3-deoxy-alpha-D-manno-2-octulosonate-8-phosphate + phosphate. It functions in the pathway carbohydrate biosynthesis; 3-deoxy-D-manno-octulosonate biosynthesis; 3-deoxy-D-manno-octulosonate from D-ribulose 5-phosphate: step 2/3. The protein operates within bacterial outer membrane biogenesis; lipopolysaccharide biosynthesis. This chain is 2-dehydro-3-deoxyphosphooctonate aldolase, found in Neisseria meningitidis serogroup C / serotype 2a (strain ATCC 700532 / DSM 15464 / FAM18).